The primary structure comprises 436 residues: Exodeoxyribonuclease 7 large subunit (436 aa).

Residues 412–436 are disordered; the sequence is PGGVMNKNSNTTDSTDNTENGTGEA. The segment covering 417–436 has biased composition (low complexity); it reads NKNSNTTDSTDNTENGTGEA.

Belongs to the XseA family. Heterooligomer composed of large and small subunits.

It is found in the cytoplasm. It catalyses the reaction Exonucleolytic cleavage in either 5'- to 3'- or 3'- to 5'-direction to yield nucleoside 5'-phosphates.. In terms of biological role, bidirectionally degrades single-stranded DNA into large acid-insoluble oligonucleotides, which are then degraded further into small acid-soluble oligonucleotides. This Corynebacterium jeikeium (strain K411) protein is Exodeoxyribonuclease 7 large subunit.